The chain runs to 65 residues: Large ribosomal subunit protein bL35 (65 aa).

Residues 1-25 (MPKMKSHRGAAKRFKKTGTGKLKRA) form a disordered region.

This sequence belongs to the bacterial ribosomal protein bL35 family.

The protein is Large ribosomal subunit protein bL35 of Clostridium botulinum (strain Alaska E43 / Type E3).